Consider the following 480-residue polypeptide: Siroheme synthase 2 (480 aa).

The interval 1-202 (MDYLPMFARL…QDWQSAETWL (202 aa)) is precorrin-2 dehydrogenase /sirohydrochlorin ferrochelatase. Residues 22 to 23 (EV) and 43 to 44 (PE) contribute to the NAD(+) site. Ser-126 carries the phosphoserine modification. The uroporphyrinogen-III C-methyltransferase stretch occupies residues 214–480 (GEVVLVGAGP…GCDLKLVNLA (267 aa)). S-adenosyl-L-methionine is bound at residue Pro-223. Residue Asp-246 is the Proton acceptor of the active site. The active-site Proton donor is the Lys-268. S-adenosyl-L-methionine-binding positions include 299 to 301 (GGD), 329 to 330 (TA), Met-381, and Gly-410.

It in the N-terminal section; belongs to the precorrin-2 dehydrogenase / sirohydrochlorin ferrochelatase family. This sequence in the C-terminal section; belongs to the precorrin methyltransferase family.

It catalyses the reaction uroporphyrinogen III + 2 S-adenosyl-L-methionine = precorrin-2 + 2 S-adenosyl-L-homocysteine + H(+). The enzyme catalyses precorrin-2 + NAD(+) = sirohydrochlorin + NADH + 2 H(+). It carries out the reaction siroheme + 2 H(+) = sirohydrochlorin + Fe(2+). The protein operates within cofactor biosynthesis; adenosylcobalamin biosynthesis; precorrin-2 from uroporphyrinogen III: step 1/1. It participates in cofactor biosynthesis; adenosylcobalamin biosynthesis; sirohydrochlorin from precorrin-2: step 1/1. It functions in the pathway porphyrin-containing compound metabolism; siroheme biosynthesis; precorrin-2 from uroporphyrinogen III: step 1/1. Its pathway is porphyrin-containing compound metabolism; siroheme biosynthesis; siroheme from sirohydrochlorin: step 1/1. The protein operates within porphyrin-containing compound metabolism; siroheme biosynthesis; sirohydrochlorin from precorrin-2: step 1/1. Multifunctional enzyme that catalyzes the SAM-dependent methylations of uroporphyrinogen III at position C-2 and C-7 to form precorrin-2 via precorrin-1. Then it catalyzes the NAD-dependent ring dehydrogenation of precorrin-2 to yield sirohydrochlorin. Finally, it catalyzes the ferrochelation of sirohydrochlorin to yield siroheme. In Aeromonas salmonicida (strain A449), this protein is Siroheme synthase 2.